The chain runs to 715 residues: Integrator complex subunit 13 (715 aa).

2 disordered regions span residues 572-612 (KPPE…SERI) and 626-659 (AEVI…SKGP). Positions 581–591 (KRGRKREDKEE) match the Nuclear localization signal (NLS) motif. The tract at residues 658-703 (GPMSLLSLWSSRINTANSRKHQEFVGRLNSVNNKAELYQHLKEENG) is cleavage module binding motif (CMBM).

It belongs to the Integrator subunit 13 family. Component of the Integrator complex, composed of core subunits INTS1, INTS2, INTS3, INTS4, INTS5, INTS6, INTS7, INTS8, INTS9/RC74, INTS10, INTS11/CPSF3L, INTS12, INTS13, INTS14 and INTS15. The core complex associates with protein phosphatase 2A subunits PPP2CA and PPP2R1A, to form the Integrator-PP2A (INTAC) complex. INTS13 is part of the tail subcomplex, composed of INTS10, INTS13, INTS14 and INTS15.

It localises to the nucleus. Its subcellular location is the cytoplasm. Its function is as follows. Component of the integrator complex, a multiprotein complex that terminates RNA polymerase II (Pol II) transcription in the promoter-proximal region of genes. The integrator complex provides a quality checkpoint during transcription elongation by driving premature transcription termination of transcripts that are unfavorably configured for transcriptional elongation: the complex terminates transcription by (1) catalyzing dephosphorylation of the C-terminal domain (CTD) of Pol II subunit POLR2A/RPB1 and SUPT5H/SPT5, (2) degrading the exiting nascent RNA transcript via endonuclease activity and (3) promoting the release of Pol II from bound DNA. The integrator complex is also involved in terminating the synthesis of non-coding Pol II transcripts, such as enhancer RNAs (eRNAs), small nuclear RNAs (snRNAs), telomerase RNAs and long non-coding RNAs (lncRNAs). Within the integrator complex, INTS13 is part of the integrator tail module and acts as a platform for the recruitment of transcription factors at promoters. Plays a role in gastrulation and early embryogenesis. This is Integrator complex subunit 13 from Xenopus laevis (African clawed frog).